The following is a 963-amino-acid chain: Low-density lipoprotein receptor-related protein 8 (963 aa).

The N-terminal stretch at 1 to 32 (MGLPEPGPLRLLALLLLLLLLLLLQLQHLAAA) is a signal peptide. At 42–826 (GPAKDCEKDQ…SKMGSTVTAA (785 aa)) the chain is on the extracellular side. 7 LDL-receptor class A domains span residues 46-82 (DCEK…DDCP), 85-123 (TCAD…ATCT), 126-164 (VCPA…AGCA), 166-202 (LCAP…RGCA), 205-246 (ACGP…ELCG), 258-295 (ACAT…ADCP), and 298-334 (TCRG…AGCL). Disulfide bonds link Cys47/Cys59, Cys54/Cys72, Cys66/Cys81, Cys86/Cys98, Cys93/Cys111, Cys105/Cys122, Cys127/Cys141, Cys134/Cys154, Cys148/Cys163, Cys167/Cys179, Cys174/Cys192, Cys186/Cys201, Cys206/Cys221, Cys213/Cys234, Cys228/Cys245, Cys259/Cys272, Cys267/Cys285, Cys279/Cys294, Cys299/Cys311, Cys306/Cys324, Cys318/Cys333, Cys340/Cys351, Cys347/Cys360, Cys362/Cys374, Cys380/Cys390, Cys386/Cys399, and Cys401/Cys414. The Ca(2+) site is built by Trp64, Asp67, Asp69, Asp71, Asp77, and Glu78. Asn176 is a glycosylation site (N-linked (GlcNAc...) asparagine). An EGF-like 1 domain is found at 336 to 375 (GLNECLHNNGGCSHICTDLKIGFECTCPAGFQLLDQKTCG). Residues 376-415 (DIDECKDPDACSQICVNYKGYFKCECYPGYEMDLLTKNCK) enclose the EGF-like 2; calcium-binding domain. Asn441 is a glycosylation site (N-linked (GlcNAc...) asparagine). 5 LDL-receptor class B repeats span residues 462 to 508 (NRIY…DWVH), 509 to 551 (KHIY…DPLR), 552 to 595 (GFMY…DLLS), 596 to 639 (QRLY…VFED), and 640 to 681 (KVFW…FHEL). N-linked (GlcNAc...) asparagine glycans are attached at residues Asn518 and Asn538. The segment at 740–798 (STSTTTLASTMTRTVPATTRAPGTTVHRSTYQNHSTETPSLTAAVPSSVSVPRAPSISP) is clustered O-linked oligosaccharides. The interval 754-815 (VPATTRAPGT…SNHSQHYANE (62 aa)) is disordered. The span at 765 to 777 (VHRSTYQNHSTET) shows a compositional bias: polar residues. An N-linked (GlcNAc...) asparagine glycan is attached at Asn772. The segment covering 778 to 799 (PSLTAAVPSSVSVPRAPSISPS) has biased composition (low complexity). Residues 800–812 (TLSPATSNHSQHY) show a composition bias toward polar residues. Asn807 carries N-linked (GlcNAc...) asparagine glycosylation. A helical membrane pass occupies residues 827–847 (VIGIIVPIVVIALLCMSGYLI). At 848 to 963 (WRNWKRKNTK…ALSLEDDGLP (116 aa)) the chain is on the cytoplasmic side.

This sequence belongs to the LDLR family. As to quaternary structure, homooligomer. Interacts with VLDLR. Reelin associates with two or more receptor molecules. Interacts with DAB1 and JNK-interacting proteins. Interacts with SNX17. Interacts with PCSK9. Interacts with MDK; this interaction is calcium dependent. Interacts with CLU. In terms of assembly, (Microbial infection) Interacts with Semliki Forest virus E2-E1 heterodimer; this interaction mediates viral entry to host cell. (Microbial infection) Interacts (via class A repeats) with Eastern equine encephalitis virus spike glycoprotein E2; this interaction mediates viral entry into host cell. Post-translationally, O-glycosylated. Some alternatively spliced isoforms lack the O-linked sugar domain. Undergoes sequential, furin and gamma-secretase dependent, proteolytic processing, resulting in the extracellular release of the entire ligand-binding domain as a soluble polypeptide and in the intracellular domain (ICD) release into the cytoplasm. The gamma-secretase-dependent proteolytical processing occurs after the bulk of the extracellular domain has been shed, in a furin-dependent manner, in alternatively spliced isoforms carrying the furin cleavage site. Hypoglycosylation (mainly hypo-O-glycosylation) leads to increased extracellular cleavage, which in turn results in accelerating release of the intracellular domain (ICD) by the gamma-secretase. The resulting receptor fragment is able to inhibit Reelin signaling and in particular the Reelin-induced DAB1 phosphorylation. In terms of processing, tyrosine phosphorylated upon apoE binding. Post-translationally, ubiquitinated by MYLIP leading to degradation. In terms of tissue distribution, expressed mainly in brain and placenta. Also expressed in platelets and megakaryocytic cells. Not expressed in the liver.

The protein localises to the cell membrane. Its subcellular location is the secreted. In terms of biological role, cell surface receptor for Reelin (RELN) and apolipoprotein E (apoE)-containing ligands. LRP8 participates in transmitting the extracellular Reelin signal to intracellular signaling processes, by binding to DAB1 on its cytoplasmic tail. Reelin acts via both the VLDL receptor (VLDLR) and LRP8 to regulate DAB1 tyrosine phosphorylation and microtubule function in neurons. LRP8 has higher affinity for Reelin than VLDLR. LRP8 is thus a key component of the Reelin pathway which governs neuronal layering of the forebrain during embryonic brain development. Binds the endoplasmic reticulum resident receptor-associated protein (RAP). Binds dimers of beta 2-glycoprotein I and may be involved in the suppression of platelet aggregation in the vasculature. Highly expressed in the initial segment of the epididymis, where it affects the functional expression of clusterin and phospholipid hydroperoxide glutathione peroxidase (PHGPx), two proteins required for sperm maturation. May also function as an endocytic receptor. Not required for endocytic uptake of SEPP1 in the kidney which is mediated by LRP2. Together with its ligand, apolipoprotein E (apoE), may indirectly play a role in the suppression of the innate immune response by controlling the survival of myeloid-derived suppressor cells. Its function is as follows. (Microbial infection) Acts as a receptor for Semliki Forest virus. In Homo sapiens (Human), this protein is Low-density lipoprotein receptor-related protein 8 (LRP8).